The primary structure comprises 431 residues: Serine hydroxymethyltransferase 2 (431 aa).

Residues leucine 131 and 135 to 137 (GHL) each bind (6S)-5,6,7,8-tetrahydrofolate. Lysine 240 carries the N6-(pyridoxal phosphate)lysine modification. Glutamate 256 contributes to the (6S)-5,6,7,8-tetrahydrofolate binding site.

Belongs to the SHMT family. Homodimer. Pyridoxal 5'-phosphate serves as cofactor.

It localises to the cytoplasm. It carries out the reaction (6R)-5,10-methylene-5,6,7,8-tetrahydrofolate + glycine + H2O = (6S)-5,6,7,8-tetrahydrofolate + L-serine. Its pathway is one-carbon metabolism; tetrahydrofolate interconversion. It functions in the pathway amino-acid biosynthesis; glycine biosynthesis; glycine from L-serine: step 1/1. Catalyzes the reversible interconversion of serine and glycine with tetrahydrofolate (THF) serving as the one-carbon carrier. This reaction serves as the major source of one-carbon groups required for the biosynthesis of purines, thymidylate, methionine, and other important biomolecules. Also exhibits THF-independent aldolase activity toward beta-hydroxyamino acids, producing glycine and aldehydes, via a retro-aldol mechanism. The chain is Serine hydroxymethyltransferase 2 from Vibrio vulnificus (strain YJ016).